Reading from the N-terminus, the 91-residue chain is UPF0512 protein E (91 aa).

Low complexity predominate over residues 1–25; the sequence is MAIFKSISSISNSTSAMGSSNSTSN. The tract at residues 1 to 26 is disordered; the sequence is MAIFKSISSISNSTSAMGSSNSTSNR.

This sequence belongs to the UPF0512 family.

This chain is UPF0512 protein E, found in Dictyostelium discoideum (Social amoeba).